Reading from the N-terminus, the 710-residue chain is E3 ubiquitin-protein ligase TRIM9 (710 aa).

An RING-type zinc finger spans residues 10–50 (CPVCGSFYREPIILPCSHNLCQACARNILVQTPESESPQSR). A Phosphothreonine modification is found at T41. S44, S46, S49, and S53 each carry phosphoserine. B box-type zinc fingers lie at residues 163–212 (AAAL…LVPP) and 224–266 (RKVS…VKAL). Residues C168, C171, C193, H198, C229, H232, C252, and H258 each coordinate Zn(2+). A coiled-coil region spans residues 273–340 (HKSQLSQALN…KAQLLARVNK (68 aa)). One can recognise a COS domain in the interval 374–432 (IKENDPSGFLQISDALIRRVHLTEDQWGKGTLTPRMTTDFDLSLDNSPLLQSIHQLDFV). A Fibronectin type-III domain is found at 440 to 535 (VPATPILQLE…KTLVLQTSEV (96 aa)). Residues 533 to 702 (SEVAWFAFDP…LHTGLPVPDF (170 aa)) enclose the B30.2/SPRY domain.

As to quaternary structure, interacts with SNAP25. Auto-ubiquitinated. As to expression, brain (at protein level). Expressed in fetal and adult brain.

It localises to the cytoplasmic vesicle. The protein resides in the secretory vesicle. The protein localises to the synaptic vesicle. Its subcellular location is the synapse. It is found in the cytoplasm. It localises to the cytoskeleton. The protein resides in the cell projection. The protein localises to the dendrite. The catalysed reaction is S-ubiquitinyl-[E2 ubiquitin-conjugating enzyme]-L-cysteine + [acceptor protein]-L-lysine = [E2 ubiquitin-conjugating enzyme]-L-cysteine + N(6)-ubiquitinyl-[acceptor protein]-L-lysine.. Its pathway is protein modification; protein ubiquitination. In terms of biological role, E3 ubiquitin-protein ligase which ubiquitinates itself in cooperation with an E2 enzyme UBE2D2/UBC4 and serves as a targeting signal for proteasomal degradation. May play a role in regulation of neuronal functions. May act as a regulator of synaptic vesicle exocytosis by controlling the availability of SNAP25 for the SNARE complex formation. The polypeptide is E3 ubiquitin-protein ligase TRIM9 (Trim9) (Rattus norvegicus (Rat)).